A 231-amino-acid chain; its full sequence is Uracil phosphoribosyltransferase (231 aa).

38–42 provides a ligand contact to GTP; that stretch reads KGLVR. 5-phospho-alpha-D-ribose 1-diphosphate is bound by residues R87, R112, and 140–148; that span reads DPMIATGST. Residues I203 and 208–210 each bind uracil; that span reads GDA. D209 contributes to the 5-phospho-alpha-D-ribose 1-diphosphate binding site.

It belongs to the UPRTase family. The cofactor is Mg(2+).

It catalyses the reaction UMP + diphosphate = 5-phospho-alpha-D-ribose 1-diphosphate + uracil. Its pathway is pyrimidine metabolism; UMP biosynthesis via salvage pathway; UMP from uracil: step 1/1. Allosterically activated by GTP. Catalyzes the conversion of uracil and 5-phospho-alpha-D-ribose 1-diphosphate (PRPP) to UMP and diphosphate. This Methanococcus maripaludis (strain C6 / ATCC BAA-1332) protein is Uracil phosphoribosyltransferase.